The following is a 490-amino-acid chain: Trigger factor (490 aa).

Positions 162–243 (GDFVSIDLSA…VGSIKERELP (82 aa)) constitute a PPIase FKBP-type domain. Residues 433 to 490 (VDAVLGPRRGGADEAGAEAEAAEEKPAKAKKSADSEKTDKSEKAEKKSKKKSKDDDAE) form a disordered region. Positions 454-477 (AEEKPAKAKKSADSEKTDKSEKAE) are enriched in basic and acidic residues.

Belongs to the FKBP-type PPIase family. Tig subfamily.

It is found in the cytoplasm. The enzyme catalyses [protein]-peptidylproline (omega=180) = [protein]-peptidylproline (omega=0). Its function is as follows. Involved in protein export. Acts as a chaperone by maintaining the newly synthesized protein in an open conformation. Functions as a peptidyl-prolyl cis-trans isomerase. This chain is Trigger factor, found in Mycobacteroides abscessus (strain ATCC 19977 / DSM 44196 / CCUG 20993 / CIP 104536 / JCM 13569 / NCTC 13031 / TMC 1543 / L948) (Mycobacterium abscessus).